Consider the following 253-residue polypeptide: MKPVIVKNVRIGEGNPKIVVPIVAPTAEDILAEATASQTLDCDLVEWRLDYYENVADFSDVCNLSQQVMERLGQKPLLLTFRTQKEGGEMAFSEENYFALYHELVKKGALDLLDIELFANPLAADTLIHEAKKAGIKIVLCNHDFQKTPSQEEIVARLRQMQMRQADICKIAVMPQDATDVLTLLSATNEMYTHYASVPIVTMSMGQLGMISRVTGQLFGSALTFGSAQQASAPGQLSVQVLRNYLKTFEQNK.

Residues 46–48 (EWR) and arginine 82 each bind 3-dehydroquinate. The active-site Proton donor/acceptor is the histidine 143. The active-site Schiff-base intermediate with substrate is lysine 170. 3 residues coordinate 3-dehydroquinate: arginine 213, serine 232, and glutamine 236.

The protein belongs to the type-I 3-dehydroquinase family. In terms of assembly, homodimer.

The catalysed reaction is 3-dehydroquinate = 3-dehydroshikimate + H2O. It participates in metabolic intermediate biosynthesis; chorismate biosynthesis; chorismate from D-erythrose 4-phosphate and phosphoenolpyruvate: step 3/7. Inhibited by flavonoids such as datiscetin, naringenin, marein and phloretin. In terms of biological role, involved in the third step of the chorismate pathway, which leads to the biosynthesis of aromatic amino acids (AroAA). Catalyzes the cis-dehydration of 3-dehydroquinate (DHQ) and introduces the first double bond of the aromatic ring to yield 3-dehydroshikimate. The reaction involves the formation of an imine intermediate between the keto group of 3-dehydroquinate and the epsilon-amino group of Lys-170 at the active site. The polypeptide is 3-dehydroquinate dehydratase (Enterococcus faecalis (strain ATCC 700802 / V583)).